We begin with the raw amino-acid sequence, 477 residues long: Aspartyl/glutamyl-tRNA(Asn/Gln) amidotransferase subunit B (477 aa).

The protein belongs to the GatB/GatE family. GatB subfamily. Heterotrimer of A, B and C subunits.

It carries out the reaction L-glutamyl-tRNA(Gln) + L-glutamine + ATP + H2O = L-glutaminyl-tRNA(Gln) + L-glutamate + ADP + phosphate + H(+). The catalysed reaction is L-aspartyl-tRNA(Asn) + L-glutamine + ATP + H2O = L-asparaginyl-tRNA(Asn) + L-glutamate + ADP + phosphate + 2 H(+). Allows the formation of correctly charged Asn-tRNA(Asn) or Gln-tRNA(Gln) through the transamidation of misacylated Asp-tRNA(Asn) or Glu-tRNA(Gln) in organisms which lack either or both of asparaginyl-tRNA or glutaminyl-tRNA synthetases. The reaction takes place in the presence of glutamine and ATP through an activated phospho-Asp-tRNA(Asn) or phospho-Glu-tRNA(Gln). This chain is Aspartyl/glutamyl-tRNA(Asn/Gln) amidotransferase subunit B, found in Legionella pneumophila subsp. pneumophila (strain Philadelphia 1 / ATCC 33152 / DSM 7513).